The chain runs to 461 residues: Asparagine--tRNA ligase (461 aa).

The protein belongs to the class-II aminoacyl-tRNA synthetase family. Homodimer.

The protein localises to the cytoplasm. It carries out the reaction tRNA(Asn) + L-asparagine + ATP = L-asparaginyl-tRNA(Asn) + AMP + diphosphate + H(+). This Geobacter metallireducens (strain ATCC 53774 / DSM 7210 / GS-15) protein is Asparagine--tRNA ligase.